Here is a 445-residue protein sequence, read N- to C-terminus: AVMGRNLALNIESRGYTVSVFNRSREKTEEVIAENPGKKLVPHYTVKEFVESLETPRRILLMVKAGAGTDSAIDSLKPYLNKGDIIIDGGNTFFQDTIRRNRELSAEGFNFIGTGVSGGEEGALKGPSIMPGGQKEAYELVAPILEQIAARAEDGEPCVAYIGADGAGHYVKMVHNGIEYGDMQLIAEAYALLKGGLALSNEELATTFTKWNEGELSSYLIDITKDIFTKKDEEGKYLVDVILDEAANKGTGKWTSQSSLDLGEPLSLITESVFARYISSLKDQRVAASKVLTGPKAQPAGDKAEFVEKVRRALYLGKIVSYAQGFSQLRAASNEYNWDLNYGEIAKIFRAGCIIRAQFLQKITDAYEQNAGIANLLLAPYFKQIADEYQQALRDVVAYAVQNGIPVPTFSAAIAYYDSYRSAVLPANLIQAQRDYFGAHTYKRT.

NADP(+) is bound by residues 1-4, 22-24, 63-65, and Asn91; these read AVMG, NRS, and VKA. Substrate contacts are provided by residues Asn91 and 117-119; that span reads SGG. The active-site Proton acceptor is Lys172. 175 to 176 provides a ligand contact to substrate; sequence HN. Catalysis depends on Glu179, which acts as the Proton donor. Substrate is bound by residues Tyr180, Lys249, Arg276, Arg434, and His440.

The protein belongs to the 6-phosphogluconate dehydrogenase family. As to quaternary structure, homodimer.

The catalysed reaction is 6-phospho-D-gluconate + NADP(+) = D-ribulose 5-phosphate + CO2 + NADPH. It functions in the pathway carbohydrate degradation; pentose phosphate pathway; D-ribulose 5-phosphate from D-glucose 6-phosphate (oxidative stage): step 3/3. Its function is as follows. Catalyzes the oxidative decarboxylation of 6-phosphogluconate to ribulose 5-phosphate and CO(2), with concomitant reduction of NADP to NADPH. This Raoultella planticola (Klebsiella planticola) protein is 6-phosphogluconate dehydrogenase, decarboxylating (gnd).